A 1038-amino-acid polypeptide reads, in one-letter code: Isoleucine--tRNA ligase (1038 aa).

The 'HIGH' region signature appears at 47-57; sequence PFATGLPHYGH. The short motif at 591-595 is the 'KMSKS' region element; the sequence is KMSKR. Lysine 594 contributes to the ATP binding site.

This sequence belongs to the class-I aminoacyl-tRNA synthetase family. IleS type 2 subfamily. As to quaternary structure, monomer. Zn(2+) is required as a cofactor.

The protein localises to the cytoplasm. It carries out the reaction tRNA(Ile) + L-isoleucine + ATP = L-isoleucyl-tRNA(Ile) + AMP + diphosphate. Catalyzes the attachment of isoleucine to tRNA(Ile). As IleRS can inadvertently accommodate and process structurally similar amino acids such as valine, to avoid such errors it has two additional distinct tRNA(Ile)-dependent editing activities. One activity is designated as 'pretransfer' editing and involves the hydrolysis of activated Val-AMP. The other activity is designated 'posttransfer' editing and involves deacylation of mischarged Val-tRNA(Ile). This chain is Isoleucine--tRNA ligase, found in Protochlamydia amoebophila (strain UWE25).